A 1420-amino-acid polypeptide reads, in one-letter code: DNA-directed RNA polymerase subunit beta' (1420 aa).

Residues Cys71, Cys73, Cys86, and Cys89 each contribute to the Zn(2+) site. Residues Asp461, Asp463, and Asp465 each coordinate Mg(2+). Zn(2+) contacts are provided by Cys815, Cys889, Cys896, and Cys899.

The protein belongs to the RNA polymerase beta' chain family. As to quaternary structure, the RNAP catalytic core consists of 2 alpha, 1 beta, 1 beta' and 1 omega subunit. When a sigma factor is associated with the core the holoenzyme is formed, which can initiate transcription. Requires Mg(2+) as cofactor. Zn(2+) serves as cofactor.

The enzyme catalyses RNA(n) + a ribonucleoside 5'-triphosphate = RNA(n+1) + diphosphate. Its function is as follows. DNA-dependent RNA polymerase catalyzes the transcription of DNA into RNA using the four ribonucleoside triphosphates as substrates. The chain is DNA-directed RNA polymerase subunit beta' from Histophilus somni (strain 2336) (Haemophilus somnus).